Here is a 366-residue protein sequence, read N- to C-terminus: IgG receptor FcRn large subunit p51 (366 aa).

A signal peptide spans 1 to 22 (MGMSQPGVLLSLLLVLLPQTWG). Positions 23 to 111 (AEPRLPLMYH…RTLENQINGT (89 aa)) are alpha-1. Topologically, residues 23-298 (AEPRLPLMYH…VDLDSPARSS (276 aa)) are extracellular. Asn109, Asn126, Asn150, and Asn247 each carry an N-linked (GlcNAc...) asparagine glycan. Residues 112–201 (FTLQGLLGCE…ERGRQNLEWK (90 aa)) are alpha-2. 2 disulfide bridges follow: Cys120-Cys183 and Cys222-Cys276. Residues 202-291 (EPPSMRLKAR…GLAQPLTVDL (90 aa)) are alpha-3. An Ig-like C1-type domain is found at 203-290 (PPSMRLKARP…EGLAQPLTVD (88 aa)). Residues 293–298 (SPARSS) form a connecting peptide region. The chain crosses the membrane as a helical span at residues 299–322 (VPVVGIILGLLLVVVAIAGGVLLW). Residues 323–366 (NRMRSGLPAPWLSLSGDDSGDLLPGGNLPPEAEPQGVNAFPATS) lie on the Cytoplasmic side of the membrane. At Ser335 the chain carries Phosphoserine. The tract at residues 344–366 (LLPGGNLPPEAEPQGVNAFPATS) is disordered.

It belongs to the immunoglobulin superfamily. In terms of assembly, fcRn complex consists of two subunits: p51, and p14 which is equivalent to beta-2-microglobulin. It forms an MHC class I-like heterodimer. Interacts with albumin/ALB; this interaction regulates ALB homeostasis. In terms of tissue distribution, intestinal epithelium.

Its subcellular location is the cell membrane. The protein localises to the endosome membrane. In terms of biological role, cell surface receptor that transfers passive humoral immunity from the mother to the newborn. Binds to the Fc region of monomeric immunoglobulin gamma and mediates its selective uptake from milk. IgG in the milk is bound at the apical surface of the intestinal epithelium. The resultant FcRn-IgG complexes are transcytosed across the intestinal epithelium and IgG is released from FcRn into blood or tissue fluids. Throughout life, contributes to effective humoral immunity by recycling IgG and extending its half-life in the circulation. Mechanistically, monomeric IgG binding to FcRn in acidic endosomes of endothelial and hematopoietic cells recycles IgG to the cell surface where it is released into the circulation. In addition of IgG, regulates homeostasis of the other most abundant circulating protein albumin/ALB. This is IgG receptor FcRn large subunit p51 (Fcgrt) from Rattus norvegicus (Rat).